Consider the following 88-residue polypeptide: Sm-like protein LSM5 (88 aa).

Residue Ala2 is modified to N-acetylalanine. Positions 9–84 (LPSELIDRCI…IAILVPGGSP (76 aa)) constitute a Sm domain.

The protein belongs to the snRNP Sm proteins family. As to quaternary structure, component of the heptameric LSM1-LSM7 complex that forms a seven-membered ring structure with a donut shape. The LSM subunits are arranged in the order LSM1, LSM2, LSM3, LSM6, LSM5, LSM7 and LSM4. Component of the heptameric LSM2-LSM8 complex that forms a seven-membered ring structure with a donut shape. The LSM subunits are arranged in the order LSM8, LSM2, LSM3, LSM6, LSM5, LSM7 and LSM4. LSM2 subunit interacts only with its two neighboring subunits, LSM6A or LSM6B and LSM7. In terms of tissue distribution, expressed in roots, leaves, stems, flowers and siliques.

The protein resides in the cytoplasm. The protein localises to the nucleus. Component of LSM protein complexes, which are involved in RNA processing. Component of the cytoplasmic LSM1-LSM7 complex which is involved in mRNA degradation by promoting decapping and leading to accurate 5'-3' mRNA decay. The cytoplasmic LSM1-LSM7 complex regulates developmental gene expression by the decapping of specific development-related transcripts. Component of the nuclear LSM2-LSM8 complex which is involved splicing nuclear mRNAs. LSM2-LSM8 binds directly to the U6 small nuclear RNAs (snRNAs) and is essential for accurate splicing of selected development-related mRNAs through the stabilization of the spliceosomal U6 snRNA. Plays a critical role in the regulation of development-related gene expression. Involved in the control of plant sensitivity to abscisic acid (ABA) and drought. Functions with ABH1 as negative regulator of ABA signaling in guard cells. Required for regulation of splicing efficiency of many stress-responsive genes under stress conditions. The chain is Sm-like protein LSM5 from Arabidopsis thaliana (Mouse-ear cress).